A 216-amino-acid chain; its full sequence is Protein-L-isoaspartate O-methyltransferase (216 aa).

Serine 61 is a catalytic residue.

It belongs to the methyltransferase superfamily. L-isoaspartyl/D-aspartyl protein methyltransferase family.

The protein resides in the cytoplasm. It catalyses the reaction [protein]-L-isoaspartate + S-adenosyl-L-methionine = [protein]-L-isoaspartate alpha-methyl ester + S-adenosyl-L-homocysteine. Catalyzes the methyl esterification of L-isoaspartyl residues in peptides and proteins that result from spontaneous decomposition of normal L-aspartyl and L-asparaginyl residues. It plays a role in the repair and/or degradation of damaged proteins. The protein is Protein-L-isoaspartate O-methyltransferase of Dinoroseobacter shibae (strain DSM 16493 / NCIMB 14021 / DFL 12).